The chain runs to 465 residues: Exoenzymes regulatory protein AepA (465 aa).

Residues 1–21 (MKFNVKMLSVTLGLFTSHAFA) form the signal peptide.

Belongs to the metallo-dependent hydrolases superfamily.

Its function is as follows. Involved in the control of extracellular enzymes production. Stimulates PEL, PEH, CEL, and PRT production. The chain is Exoenzymes regulatory protein AepA (aepA) from Pectobacterium carotovorum subsp. carotovorum (Erwinia carotovora subsp. carotovora).